The following is a 391-amino-acid chain: D-gluconate/D-galactonate dehydratase (391 aa).

Glu198 is a Mg(2+) binding site. Catalysis depends on His200, which acts as the Proton donor. Positions 224 and 250 each coordinate Mg(2+). His300 functions as the Proton acceptor in the catalytic mechanism.

It belongs to the mandelate racemase/muconate lactonizing enzyme family. GaD subfamily. In terms of assembly, homooctamer. The cofactor is Mg(2+).

The catalysed reaction is D-gluconate = 2-dehydro-3-deoxy-D-gluconate + H2O. It carries out the reaction D-galactonate = 2-dehydro-3-deoxy-D-galactonate + H2O. It functions in the pathway carbohydrate acid metabolism; D-gluconate degradation. Its function is as follows. Involved in the degradation of glucose and galactose via the nonphosphorylative variant of Entner-Doudoroff pathway. Catalyzes the dehydration of gluconate to produce 2-keto-3-deoxygluconate (KDG). It is also able to catalyze the dehydration of galactonate to produce 2-keto-3-deoxygalactonate (KDGal). This Picrophilus torridus (strain ATCC 700027 / DSM 9790 / JCM 10055 / NBRC 100828 / KAW 2/3) protein is D-gluconate/D-galactonate dehydratase.